Here is a 460-residue protein sequence, read N- to C-terminus: Cysteine--tRNA ligase (460 aa).

Cys-28 serves as a coordination point for Zn(2+). The short motif at 30–40 is the 'HIGH' region element; that stretch reads MTVYDYCHLGH. Residues Cys-209, His-234, and Glu-238 each coordinate Zn(2+). The short motif at 266-270 is the 'KMSKS' region element; that stretch reads KMSKS. Residue Lys-269 coordinates ATP.

The protein belongs to the class-I aminoacyl-tRNA synthetase family. As to quaternary structure, monomer. The cofactor is Zn(2+).

It is found in the cytoplasm. The enzyme catalyses tRNA(Cys) + L-cysteine + ATP = L-cysteinyl-tRNA(Cys) + AMP + diphosphate. This is Cysteine--tRNA ligase from Pseudomonas fluorescens (strain ATCC BAA-477 / NRRL B-23932 / Pf-5).